Consider the following 809-residue polypeptide: WASP homolog-associated protein with actin, membranes and microtubules (809 aa).

Residues 1-260 (MEDEQPDSLE…EVATLCKLDI (260 aa)) are mediates association with membranes. Positions 261-630 (LKSLDEDDLG…FVPVGDQTHS (370 aa)) are mediates interaction with microtubules. Coiled coils occupy residues 271-298 (PRRV…IQDI), 384-479 (ELEI…CAKR), and 512-542 (SIQM…LQRL). 4 disordered regions span residues 506 to 528 (YSRQ…QKKK), 546 to 571 (KDKR…PSDL), 586 to 612 (IHPS…CQNC), and 627 to 707 (QTHS…FSCP). Residues 515–528 (MKRDKIKEEEQKKK) are compositionally biased toward basic and acidic residues. Phosphoserine is present on serine 606. The mediates actin nucleation stretch occupies residues 631 to 809 (KSSEELSLPP…DEQDPGQWDG (179 aa)). Residues 638–659 (LPPPPPPPPPPPPPPPPPPPPL) are compositionally biased toward pro residues. Residues 662–673 (LSSSSQAATHQN) are compositionally biased toward polar residues. WH2 domains are found at residues 709-727 (SMDE…LRKV) and 739-756 (INEH…LKKV). The tract at residues 754–809 (KKVHPDLGPNPSSKPTSNRRTSDLERSIKAALQRIKRVSADSEEDSDEQDPGQWDG) is disordered. Residues 763-772 (NPSSKPTSNR) show a composition bias toward polar residues. Positions 770 to 797 (SNRRTSDLERSIKAALQRIKRVSADSEE) form a coiled coil. The span at 794–803 (DSEEDSDEQD) shows a compositional bias: acidic residues. Serine 795 carries the phosphoserine modification.

In terms of assembly, interacts with ACTR3; indicative for an association with the ARP2/3 complex. Associates with microtubules; in vitro binds to tubulin heterodimer in a 1:1 stoichiometry; decorates microtubules with a repeat of 80 A along protofilaments. Interacts with RHOD (in GTP-bound form). As to expression, expressed in brain, lung, heart, colon and kidney (at protein level).

Its subcellular location is the cytoplasm. The protein localises to the endoplasmic reticulum-Golgi intermediate compartment. It is found in the cytoplasmic vesicle membrane. It localises to the golgi apparatus. The protein resides in the cis-Golgi network. Acts as a nucleation-promoting factor (NPF) that stimulates Arp2/3-mediated actin polymerization both at the Golgi apparatus and along tubular membranes. Its activity in membrane tubulation requires F-actin and interaction with microtubules. Proposed to use coordinated actin-nucleating and microtubule-binding activities of distinct WHAMM molecules to drive membrane tubule elongation; when MT-bound can recruit and remodel membrane vesicles but is prevented to activate the Arp2/3 complex. Involved as a regulator of Golgi positioning and morphology. Participates in vesicle transport between the reticulum endoplasmic and the Golgi complex. Required for RhoD-dependent actin reorganization such as in cell adhesion and cell migration. This is WASP homolog-associated protein with actin, membranes and microtubules (WHAMM) from Homo sapiens (Human).